Reading from the N-terminus, the 299-residue chain is Ethylmalonyl-CoA decarboxylase (299 aa).

K209 carries the post-translational modification N6-acetyllysine; alternate. Residue K209 is modified to N6-succinyllysine; alternate. At K293 the chain carries N6-succinyllysine.

Belongs to the enoyl-CoA hydratase/isomerase family.

It is found in the cytoplasm. The protein resides in the cytosol. The catalysed reaction is (2S)-ethylmalonyl-CoA + H(+) = butanoyl-CoA + CO2. It catalyses the reaction (S)-methylmalonyl-CoA + H(+) = propanoyl-CoA + CO2. It carries out the reaction (2R)-ethylmalonyl-CoA + H(+) = butanoyl-CoA + CO2. In terms of biological role, decarboxylates ethylmalonyl-CoA, a potentially toxic metabolite, to form butyryl-CoA, suggesting it might be involved in metabolite proofreading. Acts preferentially on (S)-ethylmalonyl-CoA but also has some activity on the (R)-isomer. Also has methylmalonyl-CoA decarboxylase activity at lower level. In Rattus norvegicus (Rat), this protein is Ethylmalonyl-CoA decarboxylase (Echdc1).